The chain runs to 135 residues: Salivary protein 15 (135 aa).

An N-terminal signal peptide occupies residues 1-21 (MESFVAMKVVCILFLVGVVAA). A glycan (N-linked (GlcNAc...) asparagine) is linked at asparagine 22. The required for Borrelia OspC-binding stretch occupies residues 48–67 (PNYISNHQKLALKLLKICKD). Residues asparagine 92 and asparagine 104 are each glycosylated (N-linked (GlcNAc...) asparagine). The CD4-binding stretch occupies residues 116-135 (GPNGQTCAEKNKCVGHIPGC).

This sequence belongs to the salp15 family. Monomer. Interacts with host CD4. Interacts with host DC-SIGN (CD209). As to quaternary structure, (Microbial infection) Interacts with Borrelia outer surface protein C (OspC). Glycosylated. As to expression, expressed in salivary glands. Detected in host skin, at the site of natural inoculation.

The protein resides in the secreted. Its function is as follows. Salivary tick protein that downregulates host immune system by binding to both dendritic cells, and CD4(+) T cells. Specifically binds to the CD4 coreceptor on T cells. This interaction prevents the activation of the Src kinase, Lck, and its downstream substrate Zap-70, and results in deficient activation of PLCgamma1, the repression of calcium fluxes triggered by T-cell antigen receptor (TCR) ligation, and a subsequent reduction in interleukin-2 production. This salivary protein also binds to DC-SIGN (CD209) on dendritic cells (DC) and activates the Raf-1 kinase/MEK signaling pathway that results in down-regulating expression of pro-inflammatory cytokines. Furthermore, it inhibits T cell proliferation induced by DCs. It also inhibits in vitro keratinocyte inflammation induced by Borrelia burgdorferi or by the major outer surface protein (OspC) of Borrelia. In addition, it downregulates chemokines and monocyte chemoattractant protein 1, as well as several antimicrobial peptides such as defensins, cathelicidin, psoriasin, and RNase 7. Apart from its immunomodulatory activities, it is also associated with protection of Borrelia spirochetes from antibody-mediated killing through its binding to OspC. In vivo, tests on different immune disease animal models show promising therapeutic results, e.g., in inhibiting HIV infection, experimental autoimmune encephalomyelitis, transplantation rejection, and asthma. (Microbial infection) Protects Borrelia garinii (strains A87S and VSBP) from host complement-mediated killing. In terms of biological role, (Microbial infection) Partially protects Borrelia burgdorferi (strains VS215 and B31) from host complement-mediated killing. The protein is Salivary protein 15 of Ixodes scapularis (Black-legged tick).